Consider the following 92-residue polypeptide: CRISPR-associated endoribonuclease Cas2 (92 aa).

Asp-9 contributes to the Mg(2+) binding site.

It belongs to the CRISPR-associated endoribonuclease Cas2 protein family. As to quaternary structure, homodimer, forms a heterotetramer with a Cas1 homodimer. The cofactor is Mg(2+).

Its function is as follows. CRISPR (clustered regularly interspaced short palindromic repeat), is an adaptive immune system that provides protection against mobile genetic elements (viruses, transposable elements and conjugative plasmids). CRISPR clusters contain sequences complementary to antecedent mobile elements and target invading nucleic acids. CRISPR clusters are transcribed and processed into CRISPR RNA (crRNA). Functions as a ssRNA-specific endoribonuclease. Involved in the integration of spacer DNA into the CRISPR cassette. The polypeptide is CRISPR-associated endoribonuclease Cas2 (Aeropyrum pernix (strain ATCC 700893 / DSM 11879 / JCM 9820 / NBRC 100138 / K1)).